We begin with the raw amino-acid sequence, 267 residues long: Small ribosomal subunit protein uS2 (267 aa).

Positions 226 to 267 (AAAPNSASVREEEFSAESADEGKGRRAPAKKGEKKADAPAAE) are disordered. Over residues 245–267 (DEGKGRRAPAKKGEKKADAPAAE) the composition is skewed to basic and acidic residues.

Belongs to the universal ribosomal protein uS2 family.

The polypeptide is Small ribosomal subunit protein uS2 (Xanthomonas oryzae pv. oryzae (strain MAFF 311018)).